The sequence spans 133 residues: Small ribosomal subunit protein bS6 (133 aa).

It belongs to the bacterial ribosomal protein bS6 family.

Its function is as follows. Binds together with bS18 to 16S ribosomal RNA. This is Small ribosomal subunit protein bS6 from Chlorobium limicola (strain DSM 245 / NBRC 103803 / 6330).